The chain runs to 185 residues: Translation initiation factor IF-3 (185 aa).

This sequence belongs to the IF-3 family. Monomer.

The protein localises to the cytoplasm. In terms of biological role, IF-3 binds to the 30S ribosomal subunit and shifts the equilibrium between 70S ribosomes and their 50S and 30S subunits in favor of the free subunits, thus enhancing the availability of 30S subunits on which protein synthesis initiation begins. The sequence is that of Translation initiation factor IF-3 from Rickettsia felis (strain ATCC VR-1525 / URRWXCal2) (Rickettsia azadi).